Reading from the N-terminus, the 177-residue chain is Large ribosomal subunit protein uL6 (177 aa).

The protein belongs to the universal ribosomal protein uL6 family. Part of the 50S ribosomal subunit.

This protein binds to the 23S rRNA, and is important in its secondary structure. It is located near the subunit interface in the base of the L7/L12 stalk, and near the tRNA binding site of the peptidyltransferase center. The chain is Large ribosomal subunit protein uL6 from Yersinia pseudotuberculosis serotype O:1b (strain IP 31758).